We begin with the raw amino-acid sequence, 156 residues long: Small ribosomal subunit protein bS16 (156 aa).

2 stretches are compositionally biased toward low complexity: residues 113–123 and 137–156; these read AESGTTAAATT and EAPA…ASES. Positions 113–156 are disordered; the sequence is AESGTTAAATTPKKKKAPKKDEAAEAPAEAAEAPAEAADAASES.

It belongs to the bacterial ribosomal protein bS16 family.

The sequence is that of Small ribosomal subunit protein bS16 from Mycolicibacterium smegmatis (strain ATCC 700084 / mc(2)155) (Mycobacterium smegmatis).